A 217-amino-acid polypeptide reads, in one-letter code: Large ribosomal subunit protein uL3 (217 aa).

The protein belongs to the universal ribosomal protein uL3 family. In terms of assembly, part of the 50S ribosomal subunit. Forms a cluster with proteins L14 and L19.

Functionally, one of the primary rRNA binding proteins, it binds directly near the 3'-end of the 23S rRNA, where it nucleates assembly of the 50S subunit. This Mycolicibacterium smegmatis (strain ATCC 700084 / mc(2)155) (Mycobacterium smegmatis) protein is Large ribosomal subunit protein uL3.